Consider the following 469-residue polypeptide: tRNA(Ile)-lysidine synthase (469 aa).

26–31 (SGGPDS) lines the ATP pocket.

Belongs to the tRNA(Ile)-lysidine synthase family.

The protein localises to the cytoplasm. It carries out the reaction cytidine(34) in tRNA(Ile2) + L-lysine + ATP = lysidine(34) in tRNA(Ile2) + AMP + diphosphate + H(+). Functionally, ligates lysine onto the cytidine present at position 34 of the AUA codon-specific tRNA(Ile) that contains the anticodon CAU, in an ATP-dependent manner. Cytidine is converted to lysidine, thus changing the amino acid specificity of the tRNA from methionine to isoleucine. This chain is tRNA(Ile)-lysidine synthase, found in Shouchella clausii (strain KSM-K16) (Alkalihalobacillus clausii).